The primary structure comprises 220 residues: Large ribosomal subunit protein uL3 (220 aa).

A disordered region spans residues 61–81; it reads KGSKSNKYANKPAEGHAKKAD.

Belongs to the universal ribosomal protein uL3 family. Part of the 50S ribosomal subunit. Forms a cluster with proteins L14 and L19.

One of the primary rRNA binding proteins, it binds directly near the 3'-end of the 23S rRNA, where it nucleates assembly of the 50S subunit. The protein is Large ribosomal subunit protein uL3 of Staphylococcus epidermidis (strain ATCC 35984 / DSM 28319 / BCRC 17069 / CCUG 31568 / BM 3577 / RP62A).